A 756-amino-acid polypeptide reads, in one-letter code: Virulence factor MDV010 (756 aa).

The signal sequence occupies residues 1–30; sequence MPSKSIADHHAGYGVALAIVALLLIHGTAL. Residues 96–120 are disordered; the sequence is EEHITLSSPRTSTKTTNENGHEKDS. Residues 100–113 show a composition bias toward polar residues; sequence TLSSPRTSTKTTNE. Asn222, Asn241, Asn287, Asn423, Asn495, Asn542, Asn552, Asn580, Asn660, Asn684, Asn715, and Asn744 each carry an N-linked (GlcNAc...) asparagine; by host glycan.

It localises to the secreted. In terms of biological role, may play a role in host immune modulation since the protein is secreted and provides an advantage for growth in vivo while it is completely dispensable in cell culture. The protein is Virulence factor MDV010 (MDV010) of Gallid herpesvirus 2 (strain Chicken/Md5/ATCC VR-987) (GaHV-2).